The sequence spans 117 residues: Large ribosomal subunit protein bL19 (117 aa).

Belongs to the bacterial ribosomal protein bL19 family.

In terms of biological role, this protein is located at the 30S-50S ribosomal subunit interface and may play a role in the structure and function of the aminoacyl-tRNA binding site. This is Large ribosomal subunit protein bL19 from Colwellia psychrerythraea (strain 34H / ATCC BAA-681) (Vibrio psychroerythus).